The chain runs to 435 residues: Serine--tRNA ligase (435 aa).

The disordered stretch occupies residues 41-70; the sequence is QVKTEELQAQRNSRSKSIGQAKAKGDHEEA. Over residues 49 to 58 the composition is skewed to polar residues; that stretch reads AQRNSRSKSI. An L-serine-binding site is contributed by 242–244; the sequence is TAE. Position 273-275 (273-275) interacts with ATP; that stretch reads RSE. L-serine is bound at residue Glu-296. Position 360-363 (360-363) interacts with ATP; that stretch reads EISS. Residue Ser-396 coordinates L-serine.

Belongs to the class-II aminoacyl-tRNA synthetase family. Type-1 seryl-tRNA synthetase subfamily. As to quaternary structure, homodimer. The tRNA molecule binds across the dimer.

The protein localises to the cytoplasm. The enzyme catalyses tRNA(Ser) + L-serine + ATP = L-seryl-tRNA(Ser) + AMP + diphosphate + H(+). It catalyses the reaction tRNA(Sec) + L-serine + ATP = L-seryl-tRNA(Sec) + AMP + diphosphate + H(+). It functions in the pathway aminoacyl-tRNA biosynthesis; selenocysteinyl-tRNA(Sec) biosynthesis; L-seryl-tRNA(Sec) from L-serine and tRNA(Sec): step 1/1. Functionally, catalyzes the attachment of serine to tRNA(Ser). Is also able to aminoacylate tRNA(Sec) with serine, to form the misacylated tRNA L-seryl-tRNA(Sec), which will be further converted into selenocysteinyl-tRNA(Sec). The sequence is that of Serine--tRNA ligase from Aliivibrio fischeri (strain MJ11) (Vibrio fischeri).